The chain runs to 229 residues: Uracil-DNA glycosylase (229 aa).

Residue Asp-64 is the Proton acceptor of the active site.

The protein belongs to the uracil-DNA glycosylase (UDG) superfamily. UNG family.

The protein resides in the cytoplasm. The enzyme catalyses Hydrolyzes single-stranded DNA or mismatched double-stranded DNA and polynucleotides, releasing free uracil.. Its function is as follows. Excises uracil residues from the DNA which can arise as a result of misincorporation of dUMP residues by DNA polymerase or due to deamination of cytosine. The protein is Uracil-DNA glycosylase of Escherichia coli O81 (strain ED1a).